Reading from the N-terminus, the 377-residue chain is F-box protein At4g00755 (377 aa).

In terms of domain architecture, F-box spans 7–47 (LDTDTSLSILSCLDDPSDIVRASAVSRSWRQFVVKYSLSKN).

This Arabidopsis thaliana (Mouse-ear cress) protein is F-box protein At4g00755.